The chain runs to 431 residues: Enolase (431 aa).

Position 164 (glutamine 164) interacts with (2R)-2-phosphoglycerate. The active-site Proton donor is the glutamate 206. Mg(2+) contacts are provided by aspartate 243, glutamate 286, and aspartate 313. Positions 338, 367, 368, and 389 each coordinate (2R)-2-phosphoglycerate. Lysine 338 functions as the Proton acceptor in the catalytic mechanism.

Belongs to the enolase family. Mg(2+) is required as a cofactor.

It is found in the cytoplasm. The protein localises to the secreted. Its subcellular location is the cell surface. It carries out the reaction (2R)-2-phosphoglycerate = phosphoenolpyruvate + H2O. It functions in the pathway carbohydrate degradation; glycolysis; pyruvate from D-glyceraldehyde 3-phosphate: step 4/5. In terms of biological role, catalyzes the reversible conversion of 2-phosphoglycerate (2-PG) into phosphoenolpyruvate (PEP). It is essential for the degradation of carbohydrates via glycolysis. The chain is Enolase from Chloroflexus aggregans (strain MD-66 / DSM 9485).